The primary structure comprises 145 residues: Deoxyuridine 5'-triphosphate nucleotidohydrolase (145 aa).

Substrate contacts are provided by residues 64–66, N77, 81–83, and M91; these read RSG and TID.

The protein belongs to the dUTPase family. Requires Mg(2+) as cofactor.

The enzyme catalyses dUTP + H2O = dUMP + diphosphate + H(+). It functions in the pathway pyrimidine metabolism; dUMP biosynthesis; dUMP from dCTP (dUTP route): step 2/2. This enzyme is involved in nucleotide metabolism: it produces dUMP, the immediate precursor of thymidine nucleotides and it decreases the intracellular concentration of dUTP so that uracil cannot be incorporated into DNA. This chain is Deoxyuridine 5'-triphosphate nucleotidohydrolase, found in Leptospira interrogans serogroup Icterohaemorrhagiae serovar copenhageni (strain Fiocruz L1-130).